Reading from the N-terminus, the 203-residue chain is Protein GrpE (203 aa).

The tract at residues 1–38 (MTQDQTAEQMPAAESADQSADQGPAAESAAPPAVDSER) is disordered.

It belongs to the GrpE family. Homodimer.

The protein localises to the cytoplasm. Functionally, participates actively in the response to hyperosmotic and heat shock by preventing the aggregation of stress-denatured proteins, in association with DnaK and GrpE. It is the nucleotide exchange factor for DnaK and may function as a thermosensor. Unfolded proteins bind initially to DnaJ; upon interaction with the DnaJ-bound protein, DnaK hydrolyzes its bound ATP, resulting in the formation of a stable complex. GrpE releases ADP from DnaK; ATP binding to DnaK triggers the release of the substrate protein, thus completing the reaction cycle. Several rounds of ATP-dependent interactions between DnaJ, DnaK and GrpE are required for fully efficient folding. In Paramagnetospirillum magneticum (strain ATCC 700264 / AMB-1) (Magnetospirillum magneticum), this protein is Protein GrpE.